The following is an 864-amino-acid chain: MKTVFKSLLLLHFLLLLLLCFVSPSSFFLLKVPVGGLVACRLRQSQAFMQFKDEFDTRHCNHSDDFNGVWCDNSTGAVTVLQLRDCLSGTLKSNSSLFGFHQLRYLALNRNNFTSASLPSEFCNLNKLKLLSLFSNGFIDLSHNDLMGSFPLVRNLGKLAVLDLSDNHFSGTLNPNNSLFELHSLRYLNLAFNNISSSLPSKFGNLNKLEVLSLSFNGFSGQCFPTISNLTRITQLYLHNNELTGSFPLVQNLTKLSFLGLSDNLFSGTIPSYLFTFPSLSTLDLRENDLSGSIEVPNSSTSSKLEIMYLGFNHLEGKILEPISKLINLKRLDLSFLNTSYPIDLNLLSPLKSLSYLDFSGNSLSPASLSSSSYIPLSMESIVLSLCGIREFPNILKHLQNLIHIDITSNQIKGKIPEWLWTLPQLSFVDISNNSFNGFQGSAEVFVNLSVRILMLDANNFEGALPTLPLSIIGFSAIHNSFTGEIPLSICNRTSLTMVDLSYNNFTGPIPQCLSNFMFVNLRKNDLEGSIPDTFYTDSSLKSLDVGYNRLTGKLPRSLLNCSSLRFLSVDNNRVKDTFPFWLKALPNLRVLTLRSNKFYGPISPPHQGPLGFPELRIFEIADNMFTGSLPPSFFVNWKASALTKNEDGGLYMVYEYDKAANSPVRYTYTDTIDLQYKGLHMEQERVLTSYAAIDFSGNRLQGQIPESIGLLKALIALNLSNNAFTGHIPLSFANLMNLESLDMSGNQLSGTIPNGLGSLSFLVYISVAHNKLKGEIPQGTQITGQIKSSFEGNAGLCGLPLQETCFDSSVPPIQPKQEDEEKGEVINWKAVAIGYAPGLLFGLAIAHLIASYKPEWLVKIIGF.

A signal peptide spans 1–29 (MKTVFKSLLLLHFLLLLLLCFVSPSSFFL). At 30–830 (LKVPVGGLVA…EEKGEVINWK (801 aa)) the chain is on the extracellular side. Residues Asn61, Asn73, Asn94, and Asn112 are each glycosylated (N-linked (GlcNAc...) asparagine). LRR repeat units lie at residues 100 to 125 (FHQL…FCNL), 127 to 148 (KLKL…DLMG), 156 to 182 (LGKL…LFEL), 183 to 205 (HSLR…KFGN), 207 to 229 (NKLE…TISN), 230 to 253 (LTRI…VQNL), 254 to 277 (TKLS…LFTF), 279 to 303 (SLST…STSS), 305 to 326 (LEIM…ISKL), 327 to 350 (INLK…LLSP), 351 to 376 (LKSL…SYIP), 378 to 398 (SMES…ILKH), 399 to 423 (LQNL…LWTL), 425 to 448 (QLSF…VFVN), and 449 to 472 (LSVR…PLSI). Asn176, Asn194, Asn229, and Asn252 each carry an N-linked (GlcNAc...) asparagine glycan. A glycan (N-linked (GlcNAc...) asparagine) is linked at Asn298. Asn338 is a glycosylation site (N-linked (GlcNAc...) asparagine). 2 N-linked (GlcNAc...) asparagine glycosylation sites follow: Asn433 and Asn448. The LRR 16; degenerate repeat unit spans residues 473 to 492 (IGFSAIHNSFTGEIPLSICN). Asn492 and Asn505 each carry an N-linked (GlcNAc...) asparagine glycan. 10 LRR repeats span residues 493–514 (RTSL…PQCL), 515–538 (SNFM…FYTD), 539–562 (SSLK…LLNC), 564–585 (SLRF…WLKA), 586–610 (LPNL…HQGP), 613–637 (FPEL…FFVN), 688–712 (LTSY…IGLL), 713–735 (KALI…SFAN), 736–760 (LMNL…LGSL), and 762–785 (FLVY…QITG). An N-linked (GlcNAc...) asparagine glycan is attached at Asn561. N-linked (GlcNAc...) asparagine glycosylation is present at Asn719. Residues 831-851 (AVAIGYAPGLLFGLAIAHLIA) form a helical membrane-spanning segment. Residues 852 to 864 (SYKPEWLVKIIGF) are Cytoplasmic-facing.

Belongs to the RLP family.

The protein localises to the cell membrane. The sequence is that of Receptor like protein 24 from Arabidopsis thaliana (Mouse-ear cress).